A 113-amino-acid polypeptide reads, in one-letter code: Large ribosomal subunit protein bL17 (113 aa).

It belongs to the bacterial ribosomal protein bL17 family. In terms of assembly, part of the 50S ribosomal subunit. Contacts protein L32.

This is Large ribosomal subunit protein bL17 from Clostridium botulinum (strain ATCC 19397 / Type A).